We begin with the raw amino-acid sequence, 1259 residues long: Translocation and assembly module subunit TamB (1259 aa).

Methionine 1 carries the post-translational modification N-formylmethionine. Residues 1–6 lie on the Cytoplasmic side of the membrane; the sequence is MSLWKK. Residues 7–27 form a helical; Signal-anchor for type II membrane protein membrane-spanning segment; that stretch reads ISLGVVIVILLLLGSVAFLVG. The Periplasmic segment spans residues 28–1259; sequence TTSGLHLVFK…ALDLLYQFEF (1232 aa).

The protein belongs to the TamB family. As to quaternary structure, interacts with TamA to form the translocation and assembly module (TAM).

It is found in the cell inner membrane. Component of the translocation and assembly module (TAM), which facilitates the insertion and assembly of specific beta-barrel proteins into the outer membrane. Promotes the assembly and secretion across the outer membrane of a subset of autotransporters, such as Ag43. Involved in the assembly of the outer membrane usher protein FimD. In vitro, when TAM is reconstituted into preformed liposomes, it can promote the assembly of several outer membrane proteins, including OmpA, EspP, Ag43 and FadL. TamA is sufficient to catalyze a low level of outer membrane protein (OMP) assembly, but both TamA and TamB are required for efficient OMP assembly. TamB may regulate TamA activity. It could regulate conformational changes in TamA to drive its function in OMP assembly. It could also act as a chaperone that facilitate the transport of nascent membrane proteins across the periplasm to TamA in the outer membrane. In terms of biological role, in addition, is involved in outer membrane lipid homeostasis. Likely transports phospholipids between the inner membrane and the outer membrane. It would provide a bridge-like structure that protects phospholipids as they travel across the periplasm. One possible explanation for the apparent dual function of TAM is that TamB is a somewhat generic transporter of hydrophobic molecules. Functionally, tamB, YdbH and YhdP are redundant, but not equivalent, in performing an essential function for growth and maintaining lipid homeostasis in the outer membrane. The transport functions of TamB and YhdP could be differentiated according to the fatty acid saturation state of the phospholipids, with TamB transporting more unsaturated phospholipids and YhdP more saturated phospholipids. Any of these three proteins is sufficient for growth. The polypeptide is Translocation and assembly module subunit TamB (Escherichia coli (strain K12)).